A 378-amino-acid chain; its full sequence is Chaperone protein DnaJ (378 aa).

The 66-residue stretch at Asp5 to Gly70 folds into the J domain. The CR-type zinc-finger motif lies at Gly138–Thr216. The Zn(2+) site is built by Cys151, Cys154, Cys168, Cys171, Cys190, Cys193, Cys204, and Cys207. CXXCXGXG motif repeat units lie at residues Cys151 to Gly158, Cys168 to Gly175, Cys190 to Gly197, and Cys204 to Gly211.

It belongs to the DnaJ family. Homodimer. Zn(2+) is required as a cofactor.

It is found in the cytoplasm. Functionally, participates actively in the response to hyperosmotic and heat shock by preventing the aggregation of stress-denatured proteins and by disaggregating proteins, also in an autonomous, DnaK-independent fashion. Unfolded proteins bind initially to DnaJ; upon interaction with the DnaJ-bound protein, DnaK hydrolyzes its bound ATP, resulting in the formation of a stable complex. GrpE releases ADP from DnaK; ATP binding to DnaK triggers the release of the substrate protein, thus completing the reaction cycle. Several rounds of ATP-dependent interactions between DnaJ, DnaK and GrpE are required for fully efficient folding. Also involved, together with DnaK and GrpE, in the DNA replication of plasmids through activation of initiation proteins. This Burkholderia lata (strain ATCC 17760 / DSM 23089 / LMG 22485 / NCIMB 9086 / R18194 / 383) protein is Chaperone protein DnaJ.